Reading from the N-terminus, the 231-residue chain is 4-aminobenzoate synthase (231 aa).

6 residues coordinate Fe(2+): glutamate 81, histidine 88, glutamate 142, histidine 174, aspartate 178, and histidine 181.

Belongs to the CADD family. As to quaternary structure, homodimer. During infection, interacts with death domains of mammalian tumor necrosis factor (TNF) family receptors Fas, DR4, DR5 and to some extent TNFR1, but not with the respective downstream adapters. Fe(2+) serves as cofactor. It depends on Mn(2+) as a cofactor.

The protein resides in the secreted. It is found in the host cytoplasm. The protein is a cosubstrate rather than a true enzyme and is left in an inactive state after a single turnover. Inactive under anaerobic conditions. In terms of biological role, involved in de novo para-aminobenzoate (PABA) biosynthesis. Acts as a self-sacrificing or 'suicide' enzyme that utilizes its own active site tyrosine residue(s) as the substrate for PABA synthesis. The side chain of the tyrosine residue is released from the protein backbone via cleavage of the C(alpha)-C(beta) bond, leaving a glycine in place of the original tyrosine residue. Reaction requires O(2) and a reduced dimetal cofactor. Its function is as follows. Was also identified as a specific toxin that associates with death domains of tumor necrosis factor family (TNF) receptors and induces apoptosis in mammalian cell lines through a Caspase-dependent mechanism. This chain is 4-aminobenzoate synthase, found in Chlamydia trachomatis serovar D (strain ATCC VR-885 / DSM 19411 / UW-3/Cx).